Here is a 76-residue protein sequence, read N- to C-terminus: Exodeoxyribonuclease 7 small subunit (76 aa).

Belongs to the XseB family. In terms of assembly, heterooligomer composed of large and small subunits.

Its subcellular location is the cytoplasm. The catalysed reaction is Exonucleolytic cleavage in either 5'- to 3'- or 3'- to 5'-direction to yield nucleoside 5'-phosphates.. Functionally, bidirectionally degrades single-stranded DNA into large acid-insoluble oligonucleotides, which are then degraded further into small acid-soluble oligonucleotides. In Lactiplantibacillus plantarum (strain ATCC BAA-793 / NCIMB 8826 / WCFS1) (Lactobacillus plantarum), this protein is Exodeoxyribonuclease 7 small subunit.